The chain runs to 327 residues: GMP reductase (327 aa).

C176 acts as the Thioimidate intermediate in catalysis. Residue 205-228 participates in NADP(+) binding; the sequence is IIADGGIRTHGDIAKSIRFGASMV.

This sequence belongs to the IMPDH/GMPR family. GuaC type 2 subfamily.

The catalysed reaction is IMP + NH4(+) + NADP(+) = GMP + NADPH + 2 H(+). In terms of biological role, catalyzes the irreversible NADPH-dependent deamination of GMP to IMP. It functions in the conversion of nucleobase, nucleoside and nucleotide derivatives of G to A nucleotides, and in maintaining the intracellular balance of A and G nucleotides. This Streptococcus suis (strain 98HAH33) protein is GMP reductase.